We begin with the raw amino-acid sequence, 130 residues long: Flagellar assembly factor FliW (130 aa).

Belongs to the FliW family. In terms of assembly, interacts with translational regulator CsrA and flagellin(s).

It localises to the cytoplasm. In terms of biological role, acts as an anti-CsrA protein, binds CsrA and prevents it from repressing translation of its target genes, one of which is flagellin. Binds to flagellin and participates in the assembly of the flagellum. The sequence is that of Flagellar assembly factor FliW from Clostridioides difficile (strain 630) (Peptoclostridium difficile).